Reading from the N-terminus, the 304-residue chain is Ornithine carbamoyltransferase (304 aa).

Residues 47–50 (STRT), Arg-98, and 125–128 (HPCQ) contribute to the carbamoyl phosphate site. Residues Asn-156, Asp-221, and 225–226 (SM) contribute to the L-ornithine site. Carbamoyl phosphate contacts are provided by residues 262–263 (CL) and Arg-290.

This sequence belongs to the aspartate/ornithine carbamoyltransferase superfamily. OTCase family.

The protein localises to the cytoplasm. The enzyme catalyses carbamoyl phosphate + L-ornithine = L-citrulline + phosphate + H(+). The protein operates within amino-acid biosynthesis; L-arginine biosynthesis; L-arginine from L-ornithine and carbamoyl phosphate: step 1/3. Functionally, reversibly catalyzes the transfer of the carbamoyl group from carbamoyl phosphate (CP) to the N(epsilon) atom of ornithine (ORN) to produce L-citrulline. The sequence is that of Ornithine carbamoyltransferase from Methanococcus maripaludis (strain C7 / ATCC BAA-1331).